The following is a 41-amino-acid chain: Large ribosomal subunit protein bL36 (41 aa).

It belongs to the bacterial ribosomal protein bL36 family.

The polypeptide is Large ribosomal subunit protein bL36 (Gluconobacter oxydans (strain 621H) (Gluconobacter suboxydans)).